The primary structure comprises 400 residues: Large envelope protein (400 aa).

Position 1 is an N-acetylmethionine (Met1). Gly2 carries N-myristoyl glycine; by host lipidation. A pre-S1 region spans residues 2-119; sequence GAPLSTARRG…PPLRDTHPQA (118 aa). Positions 2–174 are pre-S; that stretch reads GAPLSTARRG…FSKTGDPAMN (173 aa). Residues 2–181 lie on the Virion surface; in external conformation side of the membrane; it reads GAPLSTARRG…AMNMENITSG (180 aa). The Intravirion; in internal conformation segment spans residues 2–253; the sequence is GAPLSTARRG…PGYRWMCLRR (252 aa). Pro4 carries an N-linked (GlcNAc...) asparagine glycan. The interval 70-115 is disordered; sequence PHGGLLGWSPQAQGILTTSPPDPPPASTNRRSGRKPTPVSPPLRDT. A compositionally biased stretch (polar residues) spans 79-88; the sequence is PQAQGILTTS. The pre-S2 stretch occupies residues 120–174; it reads MQWNSTQFHQALLDPRVRGLYFPAGGSSSETQNPAPTIASLTSSIFSKTGDPAMN. A helical membrane pass occupies residues 182–202; the sequence is LLRPLLVLQAVCFLLTKILTI. At 203 to 253 the chain is on the intravirion; in external conformation side; sequence PQSLDSWWTSLNFLGVPPGCPGQNSQSPISNHLPTSCPPTCPGYRWMCLRR. A helical transmembrane segment spans residues 254–274; that stretch reads FIIFLFILLLCLIFLLVLLDY. Over 275–348 the chain is Virion surface; that stretch reads QGMLPVCPLL…WASARFSWLS (74 aa). A glycan (N-linked (GlcNAc...) asparagine; by host) is linked at Asn320. The helical transmembrane segment at 349–369 threads the bilayer; that stretch reads LLVQFVQWCVGLSPTVWLLVI. Residues 370–375 are Intravirion-facing; the sequence is WMIWYW. The helical transmembrane segment at 376–398 threads the bilayer; that stretch reads GPNLCSILSPFIPLLPIFCYLWA. At 399 to 400 the chain is on the virion surface side; the sequence is SI.

Belongs to the orthohepadnavirus major surface antigen family. In its internal form (Li-HBsAg), interacts with the capsid protein and with the isoform S. Interacts with host chaperone CANX. In terms of assembly, associates with host chaperone CANX through its pre-S2 N glycan; this association may be essential for isoform M proper secretion. As to quaternary structure, interacts with isoform L. Interacts with the antigens of satellite virus HDV (HDVAgs); this interaction is required for encapsidation of HDV genomic RNA. In terms of processing, isoform M is N-terminally acetylated by host at a ratio of 90%, and N-glycosylated by host at the pre-S2 region. Myristoylated.

The protein localises to the virion membrane. The large envelope protein exists in two topological conformations, one which is termed 'external' or Le-HBsAg and the other 'internal' or Li-HBsAg. In its external conformation the protein attaches the virus to cell receptors and thereby initiating infection. This interaction determines the species specificity and liver tropism. This attachment induces virion internalization predominantly through caveolin-mediated endocytosis. The large envelope protein also assures fusion between virion membrane and endosomal membrane. In its internal conformation the protein plays a role in virion morphogenesis and mediates the contact with the nucleocapsid like a matrix protein. In terms of biological role, the middle envelope protein plays an important role in the budding of the virion. It is involved in the induction of budding in a nucleocapsid independent way. In this process the majority of envelope proteins bud to form subviral lipoprotein particles of 22 nm of diameter that do not contain a nucleocapsid. This is Large envelope protein from Hepatitis B virus genotype H (isolate United States/LAS2523/2002) (HBV-H).